The sequence spans 642 residues: 1-deoxy-D-xylulose-5-phosphate synthase (642 aa).

Thiamine diphosphate-binding positions include His-79 and 120-122; that span reads GHS. Asp-151 is a Mg(2+) binding site. Thiamine diphosphate is bound by residues 152 to 153, Asn-180, Tyr-290, and Glu-372; that span reads GS. Asn-180 serves as a coordination point for Mg(2+).

The protein belongs to the transketolase family. DXPS subfamily. Homodimer. Mg(2+) is required as a cofactor. It depends on thiamine diphosphate as a cofactor.

It catalyses the reaction D-glyceraldehyde 3-phosphate + pyruvate + H(+) = 1-deoxy-D-xylulose 5-phosphate + CO2. It participates in metabolic intermediate biosynthesis; 1-deoxy-D-xylulose 5-phosphate biosynthesis; 1-deoxy-D-xylulose 5-phosphate from D-glyceraldehyde 3-phosphate and pyruvate: step 1/1. Catalyzes the acyloin condensation reaction between C atoms 2 and 3 of pyruvate and glyceraldehyde 3-phosphate to yield 1-deoxy-D-xylulose-5-phosphate (DXP). The sequence is that of 1-deoxy-D-xylulose-5-phosphate synthase from Rhodospirillum centenum (strain ATCC 51521 / SW).